The sequence spans 404 residues: Cysteine desulfurase IscS (404 aa).

Pyridoxal 5'-phosphate contacts are provided by residues 75-76 (AT), Asn-155, Gln-183, and 203-205 (SAH). N6-(pyridoxal phosphate)lysine is present on Lys-206. A pyridoxal 5'-phosphate-binding site is contributed by Thr-243. The active-site Cysteine persulfide intermediate is the Cys-328. Residue Cys-328 participates in [2Fe-2S] cluster binding.

It belongs to the class-V pyridoxal-phosphate-dependent aminotransferase family. NifS/IscS subfamily. In terms of assembly, homodimer. Forms a heterotetramer with IscU, interacts with other sulfur acceptors. Requires pyridoxal 5'-phosphate as cofactor.

Its subcellular location is the cytoplasm. It carries out the reaction (sulfur carrier)-H + L-cysteine = (sulfur carrier)-SH + L-alanine. Its pathway is cofactor biosynthesis; iron-sulfur cluster biosynthesis. Master enzyme that delivers sulfur to a number of partners involved in Fe-S cluster assembly, tRNA modification or cofactor biosynthesis. Catalyzes the removal of elemental sulfur atoms from cysteine to produce alanine. Functions as a sulfur delivery protein for Fe-S cluster synthesis onto IscU, an Fe-S scaffold assembly protein, as well as other S acceptor proteins. This is Cysteine desulfurase IscS from Vesicomyosocius okutanii subsp. Calyptogena okutanii (strain HA).